A 204-amino-acid chain; its full sequence is Holliday junction branch migration complex subunit RuvA (204 aa).

The domain I stretch occupies residues 1-63 (MIGWLQGRVL…EDGQFLYGFS (63 aa)). Residues 64–142 (SFLQRQLFRE…KNDLFLCDES (79 aa)) form a domain II region. The flexible linker stretch occupies residues 143–152 (ESSRAPIALS). The segment at 152–204 (SASEEAIQALIALELAPAEAELWVKKAQKTLAEDADSAALIKTAFALRLQGAK) is domain III.

This sequence belongs to the RuvA family. As to quaternary structure, homotetramer. Forms an RuvA(8)-RuvB(12)-Holliday junction (HJ) complex. HJ DNA is sandwiched between 2 RuvA tetramers; dsDNA enters through RuvA and exits via RuvB. An RuvB hexamer assembles on each DNA strand where it exits the tetramer. Each RuvB hexamer is contacted by two RuvA subunits (via domain III) on 2 adjacent RuvB subunits; this complex drives branch migration. In the full resolvosome a probable DNA-RuvA(4)-RuvB(12)-RuvC(2) complex forms which resolves the HJ.

The protein resides in the cytoplasm. In terms of biological role, the RuvA-RuvB-RuvC complex processes Holliday junction (HJ) DNA during genetic recombination and DNA repair, while the RuvA-RuvB complex plays an important role in the rescue of blocked DNA replication forks via replication fork reversal (RFR). RuvA specifically binds to HJ cruciform DNA, conferring on it an open structure. The RuvB hexamer acts as an ATP-dependent pump, pulling dsDNA into and through the RuvAB complex. HJ branch migration allows RuvC to scan DNA until it finds its consensus sequence, where it cleaves and resolves the cruciform DNA. This chain is Holliday junction branch migration complex subunit RuvA, found in Dichelobacter nodosus (strain VCS1703A).